The primary structure comprises 65 residues: Disintegrin CC8A (65 aa).

In terms of domain architecture, Disintegrin spans 1–65 (MNSAHPCCDP…SDCPRNRIKK (65 aa)). 4 cysteine pairs are disulfide-bonded: cysteine 7–cysteine 30, cysteine 21–cysteine 27, cysteine 26–cysteine 51, and cysteine 39–cysteine 58. The Cell attachment site signature appears at 43-45 (RGD).

This sequence belongs to the disintegrin family. Dimeric disintegrin subfamily. Heterodimer with CC8B; disulfide-linked. As to expression, expressed by the venom gland.

The protein localises to the secreted. Functionally, inhibits integrins alpha-IIb/beta-3 (ITGA2B/ITGB3), alpha-V/beta-3 (ITGAV/ITGB3), and alpha-5/beta-1 (ITGA5/ITGB1). The sequence is that of Disintegrin CC8A from Cerastes cerastes (Horned desert viper).